A 376-amino-acid polypeptide reads, in one-letter code: Queuine tRNA-ribosyltransferase (376 aa).

Aspartate 93 serves as the catalytic Proton acceptor. Substrate-binding positions include 93-97, aspartate 147, glutamine 190, and glycine 217; that span reads DSGGF. Residues 248–254 form an RNA binding region; it reads GVGKPGD. The active-site Nucleophile is the aspartate 267. Cysteine 305, cysteine 307, cysteine 310, and histidine 336 together coordinate Zn(2+).

This sequence belongs to the queuine tRNA-ribosyltransferase family. Homodimer. Within each dimer, one monomer is responsible for RNA recognition and catalysis, while the other monomer binds to the replacement base PreQ1. Zn(2+) serves as cofactor.

The catalysed reaction is 7-aminomethyl-7-carbaguanine + guanosine(34) in tRNA = 7-aminomethyl-7-carbaguanosine(34) in tRNA + guanine. It participates in tRNA modification; tRNA-queuosine biosynthesis. Functionally, catalyzes the base-exchange of a guanine (G) residue with the queuine precursor 7-aminomethyl-7-deazaguanine (PreQ1) at position 34 (anticodon wobble position) in tRNAs with GU(N) anticodons (tRNA-Asp, -Asn, -His and -Tyr). Catalysis occurs through a double-displacement mechanism. The nucleophile active site attacks the C1' of nucleotide 34 to detach the guanine base from the RNA, forming a covalent enzyme-RNA intermediate. The proton acceptor active site deprotonates the incoming PreQ1, allowing a nucleophilic attack on the C1' of the ribose to form the product. After dissociation, two additional enzymatic reactions on the tRNA convert PreQ1 to queuine (Q), resulting in the hypermodified nucleoside queuosine (7-(((4,5-cis-dihydroxy-2-cyclopenten-1-yl)amino)methyl)-7-deazaguanosine). In Dinoroseobacter shibae (strain DSM 16493 / NCIMB 14021 / DFL 12), this protein is Queuine tRNA-ribosyltransferase.